The following is a 229-amino-acid chain: Glutathione S-transferase 1 (229 aa).

One can recognise a GST N-terminal domain in the interval 2 to 83 (SPVKVFGHPM…YILRKYGGTA (82 aa)). Glutathione contacts are provided by residues 41–42 (HK), 54–55 (KM), and 67–68 (ES). The region spanning 93–223 (GIEELAMVDV…RVCKHMPTEF (131 aa)) is the GST C-terminal domain.

It belongs to the GST superfamily. Phi family.

The catalysed reaction is RX + glutathione = an S-substituted glutathione + a halide anion + H(+). Functionally, conjugation of reduced glutathione to a wide number of exogenous and endogenous hydrophobic electrophiles. This Triticum aestivum (Wheat) protein is Glutathione S-transferase 1 (GSTA1).